The sequence spans 229 residues: MAALQEVLLAVLLWPVLVTISNPINCGDEQSSLSNCLSISEEKLLDRESFSTLSSSIVFLKNHVLCLRRCLSHSQYSSRQARQENACMTKVLPIPSSKSEIQQITDKWLLHAVLMLVQSWIKPLVYLQTTMVRYDYASDVLLNKTKWVLEKLISLEQGVVILIKKILNEAVMTTTVSELDLFPTDLQPDILESVMNDYSLLSCFKKDARKIEILLKLLKCRRNDMYNCA.

The first 21 residues, 1–21, serve as a signal peptide directing secretion; that stretch reads MAALQEVLLAVLLWPVLVTIS. Disulfide bonds link Cys-26–Cys-36, Cys-87–Cys-203, and Cys-220–Cys-228. A glycan (N-linked (GlcNAc...) asparagine) is linked at Asn-143.

It belongs to the somatotropin/prolactin family. As to expression, pituitary gland.

It localises to the secreted. The polypeptide is Somatolactin (Tetraodon miurus (Congo puffer)).